The primary structure comprises 338 residues: 1-aminocyclopropane-1-carboxylate deaminase (338 aa).

At K51 the chain carries N6-(pyridoxal phosphate)lysine. S78 (nucleophile) is an active-site residue.

Belongs to the ACC deaminase/D-cysteine desulfhydrase family. As to quaternary structure, homotrimer. Pyridoxal 5'-phosphate is required as a cofactor.

The catalysed reaction is 1-aminocyclopropane-1-carboxylate + H2O = 2-oxobutanoate + NH4(+). Its function is as follows. Catalyzes a cyclopropane ring-opening reaction, the irreversible conversion of 1-aminocyclopropane-1-carboxylate (ACC) to ammonia and alpha-ketobutyrate. Allows growth on ACC as a nitrogen source. The polypeptide is 1-aminocyclopropane-1-carboxylate deaminase (Burkholderia orbicola (strain MC0-3)).